We begin with the raw amino-acid sequence, 223 residues long: Shematrin-like protein 2 (223 aa).

Residues 1–19 (MRILANLILLGVLFGVCLC) form the signal peptide.

Prismatic layer of shell (at protein level).

It localises to the secreted. The sequence is that of Shematrin-like protein 2 from Margaritifera margaritifera (Freshwater pearl mussel).